The chain runs to 151 residues: MKSLRLEDAVPQSGSRHRKLRVGRGHSAGQGKTSGRGMRGQKCRSGGGVRPGFEGGQIPLYMRLPKLKGFELVNPSSYTIVNLKQLRDLPADSEVNIETLLDAGILTATSGPLRVLGDGEAHVALQITAAYFTASAREKIEAAGGTCTVEA.

Positions 1 to 51 are disordered; sequence MKSLRLEDAVPQSGSRHRKLRVGRGHSAGQGKTSGRGMRGQKCRSGGGVRP. The segment covering 15 to 24 has biased composition (basic residues); that stretch reads SRHRKLRVGR. Over residues 26-38 the composition is skewed to gly residues; the sequence is HSAGQGKTSGRGM.

Belongs to the universal ribosomal protein uL15 family. Part of the 50S ribosomal subunit.

Functionally, binds to the 23S rRNA. This Gloeobacter violaceus (strain ATCC 29082 / PCC 7421) protein is Large ribosomal subunit protein uL15.